The primary structure comprises 133 residues: S-protein homolog 21 (133 aa).

Residues 1–21 form the signal peptide; the sequence is MKNLSIFLFVVGLCMISDVYG.

It belongs to the plant self-incompatibility (S1) protein family.

It localises to the secreted. The chain is S-protein homolog 21 from Arabidopsis thaliana (Mouse-ear cress).